A 530-amino-acid polypeptide reads, in one-letter code: Transcription factor SPT20 homolog (530 aa).

S296 carries the post-translational modification Phosphoserine. Positions 419-530 (CPVKMSHSSS…PASSSQRHES (112 aa)) are disordered. 2 stretches are compositionally biased toward low complexity: residues 424-436 (SHSS…LNSG) and 466-475 (SSSGNSSSGN). T490 is modified (phosphothreonine). Residues 514 to 530 (LSPAALSPASSSQRHES) show a composition bias toward low complexity. A phosphoserine mark is found at S515 and S520.

This sequence belongs to the SPT20 family. In terms of assembly, interacts with ATG9A. Interacts with MAPK14.

Its function is as follows. Required for MAP kinase p38 (MAPK11, MAPK12, MAPK13 and/or MAPK14) activation during gastrulation. Required for down-regulation of E-cadherin during gastrulation by regulating E-cadherin protein level downstream from NCK-interacting kinase (NIK) and independently of the regulation of transcription by FGF signaling and Snail. Required for starvation-induced ATG9A trafficking during autophagy. The chain is Transcription factor SPT20 homolog (Supt20h) from Rattus norvegicus (Rat).